The sequence spans 185 residues: Probable prefoldin subunit 3 (185 aa).

This sequence belongs to the prefoldin subunit alpha family. In terms of assembly, heterohexamer of two PFD-alpha type and four PFD-beta type subunits.

In terms of biological role, binds specifically to cytosolic chaperonin (c-CPN) and transfers target proteins to it. Binds to nascent polypeptide chain and promotes folding in an environment in which there are many competing pathways for nonnative proteins. This Caenorhabditis elegans protein is Probable prefoldin subunit 3 (pfd-3).